Reading from the N-terminus, the 100-residue chain is Urease subunit gamma (100 aa).

This sequence belongs to the urease gamma subunit family. As to quaternary structure, heterotrimer of UreA (gamma), UreB (beta) and UreC (alpha) subunits. Three heterotrimers associate to form the active enzyme.

Its subcellular location is the cytoplasm. The catalysed reaction is urea + 2 H2O + H(+) = hydrogencarbonate + 2 NH4(+). Its pathway is nitrogen metabolism; urea degradation; CO(2) and NH(3) from urea (urease route): step 1/1. This is Urease subunit gamma from Verminephrobacter eiseniae (strain EF01-2).